Here is a 540-residue protein sequence, read N- to C-terminus: Serine/threonine-protein phosphatase ppzA (540 aa).

Disordered stretches follow at residues 1–108 (MGQS…KRGH) and 120–140 (VDHV…STQK). Polar residues-rich tracts occupy residues 15-24 (SLQSYPSFSR) and 45-54 (SDSPRGSTAG). Over residues 62–88 (AASVKSTTSRRSSTNQSVQSPDDTPSQ) the composition is skewed to low complexity. Positions 89–98 (PDAPEPPPSP) are enriched in pro residues. The span at 127–136 (PPTGAAPTGP) shows a compositional bias: low complexity. Residues aspartate 239, histidine 241, aspartate 267, and asparagine 299 each contribute to the Mn(2+) site. The Phosphatase tensin-type domain occupies 258-540 (PASNYLFLGD…SLVTSWGISR (283 aa)). The active-site Proton donor is histidine 300. Mn(2+) contacts are provided by histidine 348 and histidine 423.

The protein belongs to the PPP phosphatase family. PP-Z subfamily. Interacts with at least 54 proteins, of which 31 are detected only after iron starvation and 22 are detected only in control conditions. Only the regulatory subunit of the protein phosphatase PP1 (Afu1g04800/AFUB_005140) interacts with ppzA in both conditions. It depends on Mn(2+) as a cofactor.

It localises to the cytoplasm. The enzyme catalyses O-phospho-L-seryl-[protein] + H2O = L-seryl-[protein] + phosphate. It carries out the reaction O-phospho-L-threonyl-[protein] + H2O = L-threonyl-[protein] + phosphate. In terms of biological role, catalytic subunit of protein phosphatase Z (PPZ) involved in iron assimilation. Regulates secondary metabolites production, including gliotoxin, pyripyropene A, fumagillin, fumiquinazoline A, triacetyl-fusarinine C, and helvolic acid. Plays a key role in pathogenicity. The sequence is that of Serine/threonine-protein phosphatase ppzA from Aspergillus fumigatus (strain CBS 144.89 / FGSC A1163 / CEA10) (Neosartorya fumigata).